The following is a 406-amino-acid chain: Erythromycin esterase type I (406 aa).

In terms of biological role, this enzyme confers resistance to erythromycin through inactivation by hydrolyzing the lactone ring of the antibiotic. This Escherichia coli protein is Erythromycin esterase type I (ereA).